The chain runs to 152 residues: MFLFIIIAVVLLVDQATKAAVQMLMCQGESIPVVPPAFYLTYIMNPGAAFGLLPHKKMLFVTVTVIIIAGVLVGYFKIRPRKPVLDYGLGLVAGGALGNLADRLRYGLVVDFLDFRIWPVFNLADTAIVTGAFLLAWALLNDSDKSSKKERK.

A run of 3 helical transmembrane segments spans residues 33–53 (VVPP…FGLL), 58–78 (MLFV…YFKI), and 83–102 (PVLD…NLAD). Residues Asp111 and Asp125 contribute to the active site. Residues 120–140 (VFNLADTAIVTGAFLLAWALL) traverse the membrane as a helical segment.

The protein belongs to the peptidase A8 family.

The protein localises to the cell membrane. The enzyme catalyses Release of signal peptides from bacterial membrane prolipoproteins. Hydrolyzes -Xaa-Yaa-Zaa-|-(S,diacylglyceryl)Cys-, in which Xaa is hydrophobic (preferably Leu), and Yaa (Ala or Ser) and Zaa (Gly or Ala) have small, neutral side chains.. It participates in protein modification; lipoprotein biosynthesis (signal peptide cleavage). This protein specifically catalyzes the removal of signal peptides from prolipoproteins. This chain is Lipoprotein signal peptidase, found in Pelotomaculum thermopropionicum (strain DSM 13744 / JCM 10971 / SI).